A 151-amino-acid chain; its full sequence is D-aminoacyl-tRNA deacylase (151 aa).

The short motif at Gly142–Pro143 is the Gly-cisPro motif, important for rejection of L-amino acids element.

This sequence belongs to the DTD family. In terms of assembly, homodimer.

Its subcellular location is the cytoplasm. The catalysed reaction is glycyl-tRNA(Ala) + H2O = tRNA(Ala) + glycine + H(+). The enzyme catalyses a D-aminoacyl-tRNA + H2O = a tRNA + a D-alpha-amino acid + H(+). Functionally, an aminoacyl-tRNA editing enzyme that deacylates mischarged D-aminoacyl-tRNAs. Also deacylates mischarged glycyl-tRNA(Ala), protecting cells against glycine mischarging by AlaRS. Acts via tRNA-based rather than protein-based catalysis; rejects L-amino acids rather than detecting D-amino acids in the active site. By recycling D-aminoacyl-tRNA to D-amino acids and free tRNA molecules, this enzyme counteracts the toxicity associated with the formation of D-aminoacyl-tRNA entities in vivo and helps enforce protein L-homochirality. The protein is D-aminoacyl-tRNA deacylase of Psychrobacter arcticus (strain DSM 17307 / VKM B-2377 / 273-4).